The following is a 204-amino-acid chain: Protein C (204 aa).

The tract at residues 1–75 (MPSFLRGILR…TTKTEQSQRR (75 aa)) is disordered. Basic and acidic residues predominate over residues 10-20 (RPKERHHENKN). A compositionally biased stretch (low complexity) spans 25–34 (SSDSLTSSYP). Residues 60–70 (HANLTITTKTE) show a composition bias toward polar residues.

It belongs to the respirovirus protein C family.

This Homo sapiens (Human) protein is Protein C (P/V/C).